The following is a 155-amino-acid chain: MLLTTSRKPSQRTRSFSQRLSRIMGWRYINRGKMSLRDVLIEARGPVAVVSERHGNPARITFLDERGGERGYILFNPSFEMKKPELADKAVRVSSCPPGSEGLCNLMGLEVDESSSRDAWSIRTDEEYAWVMELMDARGTPAGFKLLIRDFRVGE.

In terms of domain architecture, Brix spans 1–155 (MLLTTSRKPS…LLIRDFRVGE (155 aa)).

Its function is as follows. Probably involved in the biogenesis of the ribosome. The chain is Probable Brix domain-containing ribosomal biogenesis protein from Methanothermobacter thermautotrophicus (strain ATCC 29096 / DSM 1053 / JCM 10044 / NBRC 100330 / Delta H) (Methanobacterium thermoautotrophicum).